Consider the following 863-residue polypeptide: DNA ligase (863 aa).

Residues 76 to 80 (DAAYD), 125 to 126 (SL), and E159 contribute to the NAD(+) site. K161 (N6-AMP-lysine intermediate) is an active-site residue. Residues R182 and E221 each contribute to the NAD(+) site. The interval 237–256 (EDAGRPPFANPRNAAAGSLR) is disordered. The segment covering 241-253 (RPPFANPRNAAAG) has biased composition (low complexity). K346 and K370 together coordinate NAD(+). Zn(2+)-binding residues include C467, C470, C486, and C492. One can recognise a BRCT domain in the interval 781-863 (GLPQTLEGKS…DTLLATGDVQ (83 aa)).

The protein belongs to the NAD-dependent DNA ligase family. LigA subfamily. The cofactor is Mg(2+). Requires Mn(2+) as cofactor.

It carries out the reaction NAD(+) + (deoxyribonucleotide)n-3'-hydroxyl + 5'-phospho-(deoxyribonucleotide)m = (deoxyribonucleotide)n+m + AMP + beta-nicotinamide D-nucleotide.. DNA ligase that catalyzes the formation of phosphodiester linkages between 5'-phosphoryl and 3'-hydroxyl groups in double-stranded DNA using NAD as a coenzyme and as the energy source for the reaction. It is essential for DNA replication and repair of damaged DNA. This chain is DNA ligase, found in Bifidobacterium animalis subsp. lactis (strain AD011).